Consider the following 320-residue polypeptide: MHQTKTGILLANLGTPDAPTPGAVKRYLRQFLSDKRVVDTSRLLWWPLLRGVILPIRSPRVAKLYQSVWMEEGSPLMVYSRRQQQALAARLPDTPVALGMSYGSPSLASAVDDLLAQGVGHIVVLPLYPQYSCSTVAAVWDELARILAKKRAIPGISFIRDYADHPDYIHALAASVRASFAVHGEPDLLLLSYHGIPQRYANQGDDYPQRCRDTTRELVSALGLPPERVMMTFQSRFGREPWLTPYTDETLKMLGEQGTKHIQVLCPGFAADCLETLEEIAVQNREVFLEAGGEQYEYIPALNADVAHIEMMVNLTAPYR.

Fe cation-binding residues include histidine 194 and glutamate 275.

Belongs to the ferrochelatase family.

The protein localises to the cytoplasm. The enzyme catalyses heme b + 2 H(+) = protoporphyrin IX + Fe(2+). It functions in the pathway porphyrin-containing compound metabolism; protoheme biosynthesis; protoheme from protoporphyrin-IX: step 1/1. Its function is as follows. Catalyzes the ferrous insertion into protoporphyrin IX. The sequence is that of Ferrochelatase from Klebsiella pneumoniae (strain 342).